Here is a 505-residue protein sequence, read N- to C-terminus: tRNA (guanine(6)-N(2))-methyltransferase THUMP3 (505 aa).

Positions 145–182 (KAKRRKANQSAGKEKADCGQGDKADEKDGKKKHASSTS) are disordered. A compositionally biased stretch (basic and acidic residues) spans 156–173 (GKEKADCGQGDKADEKDG). The THUMP domain occupies 171 to 287 (KDGKKKHASS…DNEVIVAIAL (117 aa)).

This sequence belongs to the methyltransferase superfamily. In terms of assembly, part of the heterodimeric THUMPD3-TRM112 methyltransferase complex; this complex forms an active tRNA methyltransferase, where TRMT112 acts as an activator of the catalytic subunit THUMPD3. In terms of tissue distribution, ubiquitously expressed. Abundantly expressed in the testis, also expressed in the brain, heart, kidney, liver, lung, muscle and spleen.

It is found in the cytoplasm. It carries out the reaction guanosine(6) in tRNA + S-adenosyl-L-methionine = N(2)-methylguanosine(6) in tRNA + S-adenosyl-L-homocysteine + H(+). The enzyme catalyses guanosine(7) in tRNA + S-adenosyl-L-methionine = N(2)-methylguanosine(7) in tRNA + S-adenosyl-L-homocysteine + H(+). Functionally, catalytic subunit of the THUMPD3-TRM112 methyltransferase complex, that specifically mediates the S-adenosyl-L-methionine-dependent N(2)-methylation of guanosine nucleotide at position 6 (m2G6) in tRNAs. This is one of the major tRNA (guanine-N(2))-methyltransferases. Also catalyzes the S-adenosyl-L-methionine-dependent N(2)-methylation of guanosine nucleotide at position 7 of tRNA(Trp). This chain is tRNA (guanine(6)-N(2))-methyltransferase THUMP3, found in Mus musculus (Mouse).